We begin with the raw amino-acid sequence, 481 residues long: Sestrin-1 (481 aa).

The interval 63-244 is N-terminal domain; may mediate the alkylhydroperoxide reductase activity; sequence FADAFTDLGR…ICDITNGNHG (182 aa). The Cysteine sulfenic acid (-SOH) intermediate role is filled by Cys122. The segment at 295–316 is disordered; sequence KTESMVFSTEDEDPPPDIDVSR. The segment at 310-481 is C-terminal domain; mediates TORC1 regulation; sequence PDIDVSRHFE…ALRAITRYMT (172 aa). Residues 375–378, Thr387, and Glu452 contribute to the L-leucine site; that span reads TYNT.

The protein belongs to the sestrin family.

The protein localises to the nucleus. It is found in the cytoplasm. It carries out the reaction a hydroperoxide + L-cysteinyl-[protein] = S-hydroxy-L-cysteinyl-[protein] + an alcohol. May function as an intracellular leucine sensor that negatively regulates the TORC1 signaling pathway through the GATOR complex. In absence of leucine, binds the GATOR subcomplex GATOR2 and prevents TORC1 signaling. Binding of leucine to SESN2 disrupts its interaction with GATOR2 thereby activating the TORC1 signaling pathway. This stress-inducible metabolic regulator may also play a role in protection against oxidative and genotoxic stresses. May prevent the accumulation of reactive oxygen species (ROS) through the alkylhydroperoxide reductase activity born by the N-terminal domain of the protein. This is Sestrin-1 from Xenopus laevis (African clawed frog).